The following is a 245-amino-acid chain: Carbohydrate deacetylase (245 aa).

Mg(2+) is bound by residues histidine 59 and histidine 125.

The protein belongs to the YdjC deacetylase family. Homodimer. It depends on Mg(2+) as a cofactor.

Functionally, probably catalyzes the deacetylation of acetylated carbohydrates an important step in the degradation of oligosaccharides. The polypeptide is Carbohydrate deacetylase (Listeria monocytogenes serotype 4a (strain HCC23)).